We begin with the raw amino-acid sequence, 319 residues long: Taste receptor type 2 member 30 (319 aa).

A topological domain (extracellular) is located at residue Met1. Residues 2 to 22 form a helical membrane-spanning segment; the sequence is ITFLPIIFSILIVVIFVIGNF. Topologically, residues 23 to 46 are cytoplasmic; it reads ANGFIALVNSIEWVKRQKISFADQ. A helical transmembrane segment spans residues 47–67; it reads ILIALAVSRVGLLWALLLHWY. Topologically, residues 68–86 are extracellular; it reads ATELNLAFYSVEVRITAYN. Residues 87–107 form a helical membrane-spanning segment; the sequence is VWAVTNHFSNWLATSLSMFYL. Topologically, residues 108-126 are cytoplasmic; sequence LKIANFSNLIFLRIKRRVK. A helical transmembrane segment spans residues 127 to 147; the sequence is SVILVILLGPLLFLVCHLFVI. Topologically, residues 148–178 are extracellular; the sequence is NMNEIVWTKEYEGNLTWKIKLRNAVFLSNMT. Residues Asn161 and Asn176 are each glycosylated (N-linked (GlcNAc...) asparagine). The chain crosses the membrane as a helical span at residues 179-199; that stretch reads LTMLANFVPLTLTLISFLLLI. Over 200–229 the chain is Cytoplasmic; it reads CSLCKHLKKMQLHGKGSQDPSTKVHIKALQ. Residues 230 to 250 form a helical membrane-spanning segment; it reads TVTCFLLLCAIYFLSMIISVY. The Extracellular portion of the chain corresponds to 251-259; sequence NFGRLEKKP. The helical transmembrane segment at 260–280 threads the bilayer; sequence VFMFCQAITFSYPSTHAFILI. At 281 to 319 the chain is on the cytoplasmic side; sequence WGNKKLKQIFLSVLWHVRYWVKDRSLRLHRFTRAALCKG.

The protein belongs to the G-protein coupled receptor T2R family.

The protein resides in the membrane. Receptor that may play a role in the perception of bitterness and is gustducin-linked. May play a role in sensing the chemical composition of the gastrointestinal content. The activity of this receptor may stimulate alpha gustducin, mediate PLC-beta-2 activation and lead to the gating of TRPM5. The protein is Taste receptor type 2 member 30 (TAS2R30) of Pongo pygmaeus (Bornean orangutan).